A 116-amino-acid chain; its full sequence is MTNKIIQMLEAEQMNKEIPTFAPGDTVVVQVKVKEGDRQRLQAFEGVVIAKRNRGLNSAFTVRKISSGVGVERTFQTYSPLVDSLSVKRRGDVRKAKLYYLRDLSGKAARIKEKLS.

It belongs to the bacterial ribosomal protein bL19 family.

Its function is as follows. This protein is located at the 30S-50S ribosomal subunit interface and may play a role in the structure and function of the aminoacyl-tRNA binding site. The chain is Large ribosomal subunit protein bL19 from Ectopseudomonas mendocina (strain ymp) (Pseudomonas mendocina).